A 410-amino-acid polypeptide reads, in one-letter code: Elongation factor Tu, chloroplastic (410 aa).

Residues 10-214 (KPHVNIGTIG…NVDEYIPTPE (205 aa)) form the tr-type G domain. The tract at residues 19–26 (GHVDHGKT) is G1. 19–26 (GHVDHGKT) contacts GTP. Mg(2+) is bound at residue T26. The tract at residues 60–64 (GITIN) is G2. The G3 stretch occupies residues 81 to 84 (DCPG). Residues 81–85 (DCPGH) and 136–139 (NKED) contribute to the GTP site. The G4 stretch occupies residues 136-139 (NKED). Positions 174-176 (SAL) are G5.

It belongs to the TRAFAC class translation factor GTPase superfamily. Classic translation factor GTPase family. EF-Tu/EF-1A subfamily.

It is found in the plastid. The protein localises to the chloroplast stroma. It carries out the reaction GTP + H2O = GDP + phosphate + H(+). Functionally, GTP hydrolase that promotes the GTP-dependent binding of aminoacyl-tRNA to the A-site of ribosomes during protein biosynthesis. The polypeptide is Elongation factor Tu, chloroplastic (tufA) (Bigelowiella natans (Pedinomonas minutissima)).